The primary structure comprises 90 residues: Protein Z600 (90 aa).

2 positions are modified to phosphothreonine: Thr-22 and Thr-48. The segment at 46 to 65 (PATPSSSGHGKFQTELKKRR) is disordered.

In terms of assembly, component of the Frs-CycA-Cdk1 complex composed of Z600, CycA and Cdk1. Interacts preferentially with CycA (via C-terminus) but is also able to interact (via C-terminus) with CycE (via C-terminus).

The protein resides in the nucleus. In terms of biological role, cell cycle regulator that is involved in modulating and adjusting cell proliferation according to the requirements of the developmental program. Interacts with mitotic Cdk1-cyclin complexes to inhibit mitotic entry at the G2/M transition. Likely to function by binding to the hydrophobic patch of cyclins to interfere with the interaction between the complex and certain Cdk1 substrates. At the mid-blastula transition, involved in the cell cycle arrest in G2 of cycle 14 by delaying mitosis and thus reducing cell proliferation allowing cell fate specification and morphogenesis to take place. Acts downstream or in parallel to the checkpoint regulator grp which is also required for the cell cycle pause at cycle 14. During gastrulation, delays mitosis in the ventral region of the embryonic mesoderm thus allowing invagination to be completed before cell division takes place. The protein is Protein Z600 of Drosophila melanogaster (Fruit fly).